The primary structure comprises 119 residues: Fluoride-specific ion channel FluC 1 (119 aa).

The next 4 membrane-spanning stretches (helical) occupy residues 6–26, 31–51, 66–86, and 91–111; these read VALVAGGGFAGALCRHGIAVV, FPWGTLVVNVAGAFLLGAIVY, VVATGFLSSFTTYSTFAGETI, and RLAALNVVGNYALGFVAVLVA.

It belongs to the fluoride channel Fluc/FEX (TC 1.A.43) family.

Its subcellular location is the cell membrane. It carries out the reaction fluoride(in) = fluoride(out). Its function is as follows. Fluoride-specific ion channel. Important for reducing fluoride concentration in the cell, thus reducing its toxicity. This Natronomonas pharaonis (strain ATCC 35678 / DSM 2160 / CIP 103997 / JCM 8858 / NBRC 14720 / NCIMB 2260 / Gabara) (Halobacterium pharaonis) protein is Fluoride-specific ion channel FluC 1.